The following is a 309-amino-acid chain: Malate dehydrogenase (309 aa).

NAD(+) contacts are provided by residues 9–14 (GAGFVG) and D33. 2 residues coordinate substrate: R82 and R88. NAD(+) is bound by residues N95 and 118-120 (VNN). N120 and R151 together coordinate substrate. Residue H175 is the Proton acceptor of the active site.

Belongs to the LDH/MDH superfamily. MDH type 3 family.

The catalysed reaction is (S)-malate + NAD(+) = oxaloacetate + NADH + H(+). Its function is as follows. Catalyzes the reversible oxidation of malate to oxaloacetate. This chain is Malate dehydrogenase, found in Roseiflexus sp. (strain RS-1).